A 504-amino-acid polypeptide reads, in one-letter code: MEYSPLSIVITFFVFLLLHWLVKTYKQKSSHKLPPGPWRLPIIGNLHQLALAASLPDQALQKLVRKYGPLMHLQLGEISTLVVSSPKMAMEMMKTHDVHFVQRPQLLAPQFMVYGATDIAFAPYGDYWRQIRKICTLELLSAKRVQSFSHIRQDENKKLIQSIHSSAGSPIDLSGKLFSLLGTTVSRAAFGKENDDQDEFMSLVRKAITMTGGFEVDDMFPSLKPLHLLTRQKAKVEHVHQRADKILEDILRKHMEKRTRVKEGNGSEAEQEDLVDVLLRLKESGSLEVPMTMENIKAVIWNIFAAGTDTSASTLEWAMSEMMKNPKVKEKAQAELRQIFKGKEIIRETDLEELSYLKSVIKETLRLHPPSQLIPRECIISTNIDGYEIPIKTKVMINTWAIGRDPQYWSDADRFIPERFNDSSIDFKGNSFEYIPFGAGRRMCPGMTFGLASITLPLALLLYHFNWELPNKMKPEDLDMDEHFGMTVARKNKLFLIPTVYEAS.

A heme-binding site is contributed by C444.

This sequence belongs to the cytochrome P450 family. Heme is required as a cofactor.

This is Cytochrome P450 71D8 (CYP71D8) from Glycine max (Soybean).